A 395-amino-acid chain; its full sequence is Zinc-regulated GTPase metalloprotein activator 1F (395 aa).

Residues 1 to 22 form a disordered region; sequence MLPAVGSVDEEEDPAEEDCPEL. The span at 8–20 shows a compositional bias: acidic residues; that stretch reads VDEEEDPAEEDCP. A psi-PxLVp motif motif is present at residues 17-24; that stretch reads EDCPELVP. 49–56 contributes to the GTP binding site; sequence GYLGAGKT. 3 residues coordinate Zn(2+): cysteine 107, cysteine 109, and cysteine 110. The CXCC motif motif lies at 107 to 110; the sequence is CLCC. GTP contacts are provided by residues 110–114 and 203–206; these read CSVKD and NKTD. In terms of domain architecture, CobW C-terminal spans 274-377; it reads IVTITFDVPG…ILKQLFIATV (104 aa).

Belongs to the SIMIBI class G3E GTPase family. ZNG1 subfamily.

It is found in the nucleus. It carries out the reaction GTP + H2O = GDP + phosphate + H(+). Functionally, zinc chaperone that directly transfers zinc cofactor to target metalloproteins, thereby activating them. Catalyzes zinc insertion into the active site of methionine aminopeptidase METAP1, which function to cleave the initiator methionine from polypeptides during or after protein translation. Mechanistically, the N-terminal psi-PxLVp motif binds to the C6H2-type zinc finger of inactive form of METAP1. After formation of the docked complex, zinc is transferred from the CXCC motif in the GTPase domain of ZNG1F to the zinc binding site in the peptidase domain of METAP1 in a process requiring GTP hydrolysis. GTP/GDP exchange is required for release of active METAP1. The protein is Zinc-regulated GTPase metalloprotein activator 1F of Homo sapiens (Human).